The primary structure comprises 379 residues: Alcohol dehydrogenase 1 (379 aa).

Residues C47, T49, H69, C99, C102, C105, C113, and C177 each contribute to the Zn(2+) site. An alcohol is bound by residues T49 and H69. T49 lines the NAD(+) pocket. NAD(+) contacts are provided by residues 202 to 207 (GLGAVG), D226, R231, T272, V295, 295 to 297 (VGV), F322, and R372.

Belongs to the zinc-containing alcohol dehydrogenase family. As to quaternary structure, homodimer. Requires Zn(2+) as cofactor.

The protein localises to the cytoplasm. It catalyses the reaction a primary alcohol + NAD(+) = an aldehyde + NADH + H(+). The enzyme catalyses a secondary alcohol + NAD(+) = a ketone + NADH + H(+). This is Alcohol dehydrogenase 1 (ADH1) from Hordeum vulgare (Barley).